Here is a 38-residue protein sequence, read N- to C-terminus: Photosystem II reaction center protein X 1 (38 aa).

Residues 8–28 (FLWSLLYGAVVLGLLFGAIVF) traverse the membrane as a helical segment.

The protein belongs to the PsbX family. Type 1 subfamily. PSII is composed of 1 copy each of membrane proteins PsbA, PsbB, PsbC, PsbD, PsbE, PsbF, PsbH, PsbI, PsbJ, PsbK, PsbL, PsbM, PsbT, PsbX, PsbY, PsbZ, Psb30/Ycf12, peripheral proteins PsbO, CyanoQ (PsbQ), PsbU, PsbV and a large number of cofactors. It forms dimeric complexes.

It localises to the cellular thylakoid membrane. Its function is as follows. Involved in the binding and/or turnover of quinones at the Q(B) site of photosystem II (PSII). PSII is a light-driven water plastoquinone oxidoreductase, using light energy to abstract electrons from H(2)O, generating a proton gradient subsequently used for ATP formation. The protein is Photosystem II reaction center protein X 1 of Synechococcus sp. (strain JA-3-3Ab) (Cyanobacteria bacterium Yellowstone A-Prime).